Reading from the N-terminus, the 150-residue chain is Ribonuclease HI (150 aa).

The region spanning 1–142 is the RNase H type-1 domain; the sequence is MSDSVELFTD…ADQLANRGVD (142 aa). Residues aspartate 10, glutamate 48, aspartate 70, and aspartate 134 each contribute to the Mg(2+) site.

This sequence belongs to the RNase H family. In terms of assembly, monomer. Mg(2+) is required as a cofactor.

Its subcellular location is the cytoplasm. It catalyses the reaction Endonucleolytic cleavage to 5'-phosphomonoester.. Functionally, endonuclease that specifically degrades the RNA of RNA-DNA hybrids. The chain is Ribonuclease HI from Pseudomonas syringae pv. tomato (strain ATCC BAA-871 / DC3000).